Reading from the N-terminus, the 187-residue chain is UPF0301 protein KPN78578_33170 (187 aa).

Belongs to the UPF0301 (AlgH) family.

The chain is UPF0301 protein KPN78578_33170 from Klebsiella pneumoniae subsp. pneumoniae (strain ATCC 700721 / MGH 78578).